The sequence spans 505 residues: ATP synthase subunit alpha (505 aa).

169-176 (GDRQTGKT) provides a ligand contact to ATP.

It belongs to the ATPase alpha/beta chains family. As to quaternary structure, F-type ATPases have 2 components, CF(1) - the catalytic core - and CF(0) - the membrane proton channel. CF(1) has five subunits: alpha(3), beta(3), gamma(1), delta(1), epsilon(1). CF(0) has three main subunits: a(1), b(2) and c(9-12). The alpha and beta chains form an alternating ring which encloses part of the gamma chain. CF(1) is attached to CF(0) by a central stalk formed by the gamma and epsilon chains, while a peripheral stalk is formed by the delta and b chains.

The protein localises to the cell membrane. The enzyme catalyses ATP + H2O + 4 H(+)(in) = ADP + phosphate + 5 H(+)(out). In terms of biological role, produces ATP from ADP in the presence of a proton gradient across the membrane. The alpha chain is a regulatory subunit. This is ATP synthase subunit alpha from Alkaliphilus oremlandii (strain OhILAs) (Clostridium oremlandii (strain OhILAs)).